The chain runs to 309 residues: MKANAFGKVAVMLGGTSAERDVSLKSGMAVLKGLVAKGIDAHAFDPAAHSLQELVEQKFDRVFIALHGRGGEDGSMQGALQILEMPYTGSDVLGCALGMDKVRCKQIWHSVGLPTANWRVVTQAEIEQVNVEAMLQELGGRVIVKPAREGSSIGMSIADNGRSLALALQHAAEFDDDLLVEQWVEGAEYTIGILEGKALPVIRLQTPHEFYDFEAKYQANDTQYHCPAGLSDDDEASLRTLAERAFAAIGGSGWGRIDVMRNNAGEWFLLEANTVPGMTEKSLVPMAAKVAGLQFNDLVERILAQTLER.

In terms of domain architecture, ATP-grasp spans 105–304 (KQIWHSVGLP…FNDLVERILA (200 aa)). Residue 135–190 (LQELGGRVIVKPAREGSSIGMSIADNGRSLALALQHAAEFDDDLLVEQWVEGAEYT) coordinates ATP. 3 residues coordinate Mg(2+): Asp258, Glu271, and Asn273.

Belongs to the D-alanine--D-alanine ligase family. Mg(2+) is required as a cofactor. The cofactor is Mn(2+).

It is found in the cytoplasm. The enzyme catalyses 2 D-alanine + ATP = D-alanyl-D-alanine + ADP + phosphate + H(+). It participates in cell wall biogenesis; peptidoglycan biosynthesis. Cell wall formation. The chain is D-alanine--D-alanine ligase from Idiomarina loihiensis (strain ATCC BAA-735 / DSM 15497 / L2-TR).